A 525-amino-acid polypeptide reads, in one-letter code: DNA polymerase epsilon subunit 2 (525 aa).

Belongs to the DNA polymerase epsilon subunit B family. As to quaternary structure, component of the epsilon DNA polymerase complex consisting of four subunits: the catalytic subunit PolE1/DNApol-epsilon255 and the accessory subunits PolE2/DNApol-epsilon58, Chrac-14/DNApolE3 and PolE4.

It localises to the nucleus. In terms of biological role, accessory component of the DNA polymerase epsilon complex. Participates in DNA repair and in chromosomal DNA replication. Has a role in the entrance and progression through S phase. Has a role in endoreplication. Essential for viability and tissue development. This chain is DNA polymerase epsilon subunit 2, found in Drosophila melanogaster (Fruit fly).